Reading from the N-terminus, the 80-residue chain is uncharacterized protein (80 aa).

This is an uncharacterized protein from Vaccinia virus (strain Copenhagen) (VACV).